We begin with the raw amino-acid sequence, 250 residues long: Ribosomal RNA small subunit methyltransferase J (250 aa).

S-adenosyl-L-methionine contacts are provided by residues 101–102 (RD), 117–118 (ER), 153–154 (SS), and D171.

Belongs to the methyltransferase superfamily. RsmJ family.

It localises to the cytoplasm. The enzyme catalyses guanosine(1516) in 16S rRNA + S-adenosyl-L-methionine = N(2)-methylguanosine(1516) in 16S rRNA + S-adenosyl-L-homocysteine + H(+). Specifically methylates the guanosine in position 1516 of 16S rRNA. This is Ribosomal RNA small subunit methyltransferase J from Escherichia coli (strain SMS-3-5 / SECEC).